The primary structure comprises 357 residues: tRNA-specific 2-thiouridylase MnmA (357 aa).

Residues glycine 7 to serine 14 and leucine 33 each bind ATP. Cysteine 94 functions as the Nucleophile in the catalytic mechanism. Cysteine 94 and cysteine 193 are joined by a disulfide. Glycine 119 contributes to the ATP binding site. The interval lysine 143 to glutamine 145 is interaction with tRNA. Cysteine 193 (cysteine persulfide intermediate) is an active-site residue. The interaction with tRNA stretch occupies residues arginine 298 to tyrosine 299.

Belongs to the MnmA/TRMU family.

It is found in the cytoplasm. It catalyses the reaction S-sulfanyl-L-cysteinyl-[protein] + uridine(34) in tRNA + AH2 + ATP = 2-thiouridine(34) in tRNA + L-cysteinyl-[protein] + A + AMP + diphosphate + H(+). Catalyzes the 2-thiolation of uridine at the wobble position (U34) of tRNA, leading to the formation of s(2)U34. The polypeptide is tRNA-specific 2-thiouridylase MnmA (Synechococcus sp. (strain ATCC 27144 / PCC 6301 / SAUG 1402/1) (Anacystis nidulans)).